A 236-amino-acid chain; its full sequence is Purine nucleoside phosphorylase CA_C1699 (236 aa).

Residues His-62, Cys-97, and His-114 each contribute to the Zn(2+) site.

Belongs to the purine nucleoside phosphorylase YfiH/LACC1 family. In terms of assembly, homodimer. Cu(2+) is required as a cofactor. Requires Zn(2+) as cofactor.

The catalysed reaction is adenosine + phosphate = alpha-D-ribose 1-phosphate + adenine. The enzyme catalyses S-methyl-5'-thioadenosine + phosphate = 5-(methylsulfanyl)-alpha-D-ribose 1-phosphate + adenine. It catalyses the reaction inosine + phosphate = alpha-D-ribose 1-phosphate + hypoxanthine. It carries out the reaction adenosine + H2O + H(+) = inosine + NH4(+). Functionally, purine nucleoside enzyme that catalyzes the phosphorolysis of adenosine and inosine nucleosides, yielding D-ribose 1-phosphate and the respective free bases, adenine and hypoxanthine. Also catalyzes the phosphorolysis of S-methyl-5'-thioadenosine into adenine and S-methyl-5-thio-alpha-D-ribose 1-phosphate. Also has adenosine deaminase activity. This Clostridium acetobutylicum (strain ATCC 824 / DSM 792 / JCM 1419 / IAM 19013 / LMG 5710 / NBRC 13948 / NRRL B-527 / VKM B-1787 / 2291 / W) protein is Purine nucleoside phosphorylase CA_C1699.